An 86-amino-acid polypeptide reads, in one-letter code: Putative membrane protein insertion efficiency factor (86 aa).

It belongs to the UPF0161 family.

The protein localises to the cell inner membrane. Functionally, could be involved in insertion of integral membrane proteins into the membrane. This is Putative membrane protein insertion efficiency factor from Haemophilus influenzae (strain 86-028NP).